Reading from the N-terminus, the 61-residue chain is Small ribosomal subunit protein uS14 (61 aa).

Residues Cys24, Cys27, Cys40, and Cys43 each coordinate Zn(2+).

Belongs to the universal ribosomal protein uS14 family. Zinc-binding uS14 subfamily. Part of the 30S ribosomal subunit. Contacts proteins S3 and S10. Zn(2+) serves as cofactor.

In terms of biological role, binds 16S rRNA, required for the assembly of 30S particles and may also be responsible for determining the conformation of the 16S rRNA at the A site. This Macrococcus caseolyticus (strain JCSC5402) (Macrococcoides caseolyticum) protein is Small ribosomal subunit protein uS14.